The chain runs to 214 residues: MSDLEDDETPQLSAHALAALQEFYAEQKQQIEPGEDDKYNIGIIEENWQLSQFWYSQETALQLAQEAIAAVGEGGRIACVSAPSVYQKLRELCRENFSIYIFEYDKRFAMYGEEFIFYDYNNPLDLPERIAAHSFDIVIADPPYLSEECLRKTSETVKYLTRGKILLCTGAIMEEQAAELLGVKMCTFVPRHTRNLANEFRCYVNYDSGLDCGI.

Ser-2 bears the N-acetylserine mark. The residue at position 2 (Ser-2) is a Phosphoserine.

It belongs to the class I-like SAM-binding methyltransferase superfamily. EFM5 family.

The protein resides in the cytoplasm. The catalysed reaction is L-lysyl-[protein] + 3 S-adenosyl-L-methionine = N(6),N(6),N(6)-trimethyl-L-lysyl-[protein] + 3 S-adenosyl-L-homocysteine + 3 H(+). In terms of biological role, protein N-lysine methyltransferase that selectively catalyzes the trimethylation of EEF1A at 'Lys-79'. This Homo sapiens (Human) protein is EEF1A lysine methyltransferase 1.